A 977-amino-acid chain; its full sequence is uncharacterized protein (977 aa).

A disordered region spans residues 100–152 (ATSPLQQNGKSRDTEKPPSMKEKDLSSNSSSQHDKAFHERVDQGKNKSSTTKY). Basic and acidic residues-rich tracts occupy residues 109–124 (KSRD…EKDL) and 131–144 (QHDK…DQGK). Ser-165 is modified (phosphoserine). Polar residues-rich tracts occupy residues 166–175 (PGQSVNSLKP) and 183–193 (STKSSTSSEMH). Residues 166-194 (PGQSVNSLKPNSGDEVPSTKSSTSSEMHT) form a disordered region.

This is an uncharacterized protein from Schizosaccharomyces pombe (strain 972 / ATCC 24843) (Fission yeast).